Here is an 86-residue protein sequence, read N- to C-terminus: Large ribosomal subunit protein bL35m (86 aa).

The transit peptide at 1-18 (MLVVFQRVVRATVLVGRK) directs the protein to the mitochondrion. Residues 45 to 69 (RKHAGAQHLNRDTSSSTRARQRQWE) are disordered.

The protein belongs to the bacterial ribosomal protein bL35 family. In terms of assembly, component of the mitochondrial large ribosomal subunit (mt-LSU). Mature yeast 74S mitochondrial ribosomes consist of a small (37S) and a large (54S) subunit. The 37S small subunit contains a 15S ribosomal RNA (15S mt-rRNA) and at least 32 different proteins. The 54S large subunit contains a 21S rRNA (21S mt-rRNA) and at least 45 different proteins.

The protein localises to the mitochondrion. In terms of biological role, component of the mitochondrial ribosome (mitoribosome), a dedicated translation machinery responsible for the synthesis of mitochondrial genome-encoded proteins, including at least some of the essential transmembrane subunits of the mitochondrial respiratory chain. The mitoribosomes are attached to the mitochondrial inner membrane and translation products are cotranslationally integrated into the membrane. The chain is Large ribosomal subunit protein bL35m (new15) from Schizosaccharomyces pombe (strain 972 / ATCC 24843) (Fission yeast).